The primary structure comprises 183 residues: uncharacterized protein (183 aa).

The next 4 helical transmembrane spans lie at 26–48 (FVAI…IIFY), 72–91 (LLVR…KVFI), 104–121 (IIEA…LIVF), and 125–147 (FTFW…YVLL).

It localises to the cell membrane. This is an uncharacterized protein from Aquifex aeolicus (strain VF5).